A 105-amino-acid polypeptide reads, in one-letter code: MAAKIRREDEVIVLTGKDKGKRGKVTQVLVTEGKVLVEGINLVKKHQKPVPALGQAGGIISKEAPMDVSNVALFNSAAGKADRVGFRIEDGKKVRFFKSTGELVK.

It belongs to the universal ribosomal protein uL24 family. In terms of assembly, part of the 50S ribosomal subunit.

One of two assembly initiator proteins, it binds directly to the 5'-end of the 23S rRNA, where it nucleates assembly of the 50S subunit. Its function is as follows. One of the proteins that surrounds the polypeptide exit tunnel on the outside of the subunit. This chain is Large ribosomal subunit protein uL24, found in Aeromonas salmonicida (strain A449).